The following is a 65-amino-acid chain: Large ribosomal subunit protein bL35 (65 aa).

The protein belongs to the bacterial ribosomal protein bL35 family.

The chain is Large ribosomal subunit protein bL35 from Psychrobacter arcticus (strain DSM 17307 / VKM B-2377 / 273-4).